Here is a 206-residue protein sequence, read N- to C-terminus: Small ribosomal subunit protein uS4 (206 aa).

The segment at 29–52 (LDKRPYAPGQHGQRRGRGRPSDYS) is disordered. The region spanning 96 to 171 (RRLDNVVFRM…QKRRRVSPWV (76 aa)) is the S4 RNA-binding domain.

Belongs to the universal ribosomal protein uS4 family. Part of the 30S ribosomal subunit. Contacts protein S5. The interaction surface between S4 and S5 is involved in control of translational fidelity.

Functionally, one of the primary rRNA binding proteins, it binds directly to 16S rRNA where it nucleates assembly of the body of the 30S subunit. In terms of biological role, with S5 and S12 plays an important role in translational accuracy. The protein is Small ribosomal subunit protein uS4 of Deinococcus deserti (strain DSM 17065 / CIP 109153 / LMG 22923 / VCD115).